Reading from the N-terminus, the 569-residue chain is Urease subunit alpha (569 aa).

The region spanning 132 to 569 (GGIDSHIHFI…LPLAQRYFLF (438 aa)) is the Urease domain. His-137, His-139, and Lys-220 together coordinate Ni(2+). Lys-220 is subject to N6-carboxylysine. His-222 is a binding site for substrate. Positions 249 and 275 each coordinate Ni(2+). The active-site Proton donor is the His-323. Asp-363 is a binding site for Ni(2+).

Belongs to the metallo-dependent hydrolases superfamily. Urease alpha subunit family. As to quaternary structure, heterotrimer of UreA (gamma), UreB (beta) and UreC (alpha) subunits. Three heterotrimers associate to form the active enzyme. Requires Ni cation as cofactor. Carboxylation allows a single lysine to coordinate two nickel ions.

Its subcellular location is the cytoplasm. The enzyme catalyses urea + 2 H2O + H(+) = hydrogencarbonate + 2 NH4(+). Its pathway is nitrogen metabolism; urea degradation; CO(2) and NH(3) from urea (urease route): step 1/1. This chain is Urease subunit alpha, found in Dechloromonas aromatica (strain RCB).